Consider the following 251-residue polypeptide: CCN family member 5 (251 aa).

An N-terminal signal peptide occupies residues 1–23; it reads MRGNPLIHLLAISFLCILSMVYS. One can recognise an IGFBP N-terminal domain in the interval 24–103; sequence QLCPAPCACP…EEDDGSCEVN (80 aa). Disulfide bonds link Cys-26/Cys-50, Cys-30/Cys-52, Cys-32/Cys-53, Cys-39/Cys-56, Cys-64/Cys-78, and Cys-70/Cys-100. The region spanning 98–164 is the VWFC domain; it reads GSCEVNGRRY…GRCCPEWVCD (67 aa). Residues 195 to 239 form the TSP type-1 domain; that stretch reads CPNWSTAWGPCSTTCGLGIATRVSNQNRFCQLEIQRRLCLSRPCL. The N-linked (GlcNAc...) asparagine glycan is linked to Asn-197.

It belongs to the CCN family.

The protein resides in the secreted. In terms of biological role, may play an important role in modulating bone turnover. Promotes the adhesion of osteoblast cells and inhibits the binding of fibrinogen to integrin receptors. In addition, inhibits osteocalcin production. The polypeptide is CCN family member 5 (Ccn5) (Mus musculus (Mouse)).